Here is a 904-residue protein sequence, read N- to C-terminus: Pyrimidine pathway regulatory protein 1 (904 aa).

Positions 1–11 (MKQKKFNSKKS) are enriched in basic residues. Residues 1 to 27 (MKQKKFNSKKSNRTDLSKRGDSPNIGI) are disordered. Basic and acidic residues predominate over residues 12–21 (NRTDLSKRGD). Residues Cys34, Cys37, Cys44, Cys51, Cys54, and Cys61 each contribute to the Zn(2+) site. A DNA-binding region (zn(2)-C6 fungal-type) is located at residues 34–61 (CKRCRLKKIKCDQEFPSCKRCAKLEVPC). The interval 883–904 (GNEGESSYDISKGKNSESGGIF) is disordered.

As to quaternary structure, binds DNA as a homodimer.

It is found in the nucleus. Functionally, positive regulator of URA1 and URA3 expression. This is Pyrimidine pathway regulatory protein 1 (PPR1) from Saccharomyces cerevisiae (strain ATCC 204508 / S288c) (Baker's yeast).